Reading from the N-terminus, the 720-residue chain is Translation initiation factor IF-2 (720 aa).

The segment at 48 to 138 (KKFKASQAKD…NEVEETKEMP (91 aa)) is disordered. Composition is skewed to low complexity over residues 60-75 (KQNTQNNHQKSNNKQN) and 99-113 (KGKQQNKNNKTNKNQ). Basic residues predominate over residues 114 to 123 (KNNKNKKNNK). Residues 222–391 (ERPAVVTIMG…GLVAEVQELK (170 aa)) form the tr-type G domain. The G1 stretch occupies residues 231-238 (GHVDHGKT). 231 to 238 (GHVDHGKT) is a binding site for GTP. A G2 region spans residues 256–260 (GITQH). Residues 277–280 (DTPG) form a G3 region. Residues 277–281 (DTPGH) and 331–334 (NKID) each bind GTP. Residues 331–334 (NKID) are G4. Residues 367–369 (SAL) form a G5 region.

It belongs to the TRAFAC class translation factor GTPase superfamily. Classic translation factor GTPase family. IF-2 subfamily.

It localises to the cytoplasm. Its function is as follows. One of the essential components for the initiation of protein synthesis. Protects formylmethionyl-tRNA from spontaneous hydrolysis and promotes its binding to the 30S ribosomal subunits. Also involved in the hydrolysis of GTP during the formation of the 70S ribosomal complex. The polypeptide is Translation initiation factor IF-2 (Staphylococcus epidermidis (strain ATCC 35984 / DSM 28319 / BCRC 17069 / CCUG 31568 / BM 3577 / RP62A)).